A 677-amino-acid polypeptide reads, in one-letter code: MTQVAKKILVTCALPYANGSIHLGHMLEHIQADVWVRYQRMRGHEVNFICADDAHGTPIMLKAQQLGITPEQMIGEMSQEHQTDFAGFNISYDNYHSTHSDENRELSELIYTRLKENGFIKNRTISQLYDPEKGMFLPDRFVKGTCPKCKSADQYGDNCEVCGATYSPTELIEPKSVVSGATPVMRDSEHFFFDLPSFSEMLQAWTRSGALQEQVANKMQEWFESGLQQWDISRDAPYFGFEIPNAPGKYFYVWLDAPIGYMGSFKNLCDKRGDTTSFDEYWKKDSDAELYHFIGKDIVYFHSLFWPAMLEGSHFRKPTNLFVHGYVTVNGAKMSKSRGTFIKASTWLKHFDADSLRYYYTAKLSSRIDDIDLNLEDFVQRVNADIVNKVVNLASRNAGFINKRFDGVLAAELADPQLYKTFTDAAAVIGEAWESREFGKAIREIMALADIANRYVDEQAPWVVAKQEGRDADLQAICSMGINLFRVLMTYLKPVLPTLSERVEAFLNSELNWDAIEQPLLGHKVNTFKALYNRIDMKQVEALVESSKEEVKAAAAPVTGPLADFPIQETITFDDFAKIDLRVALIENAEFVDGSDKLLRLTLDLGGEKRNVFSGIRSAYPDPQALIGRQTVMVANLAPRKMRFGVSEGMVMAAGPGGKDIFLLSPDDGAKPGQQVK.

The 'HIGH' region motif lies at 15-25 (PYANGSIHLGH). Zn(2+) contacts are provided by cysteine 146, cysteine 149, cysteine 159, and cysteine 162. Positions 333-337 (KMSKS) match the 'KMSKS' region motif. Lysine 336 is a binding site for ATP. Residues 575-677 (DFAKIDLRVA…DGAKPGQQVK (103 aa)) enclose the tRNA-binding domain.

The protein belongs to the class-I aminoacyl-tRNA synthetase family. MetG type 1 subfamily. In terms of assembly, homodimer. Zn(2+) is required as a cofactor.

The protein resides in the cytoplasm. The catalysed reaction is tRNA(Met) + L-methionine + ATP = L-methionyl-tRNA(Met) + AMP + diphosphate. Is required not only for elongation of protein synthesis but also for the initiation of all mRNA translation through initiator tRNA(fMet) aminoacylation. The chain is Methionine--tRNA ligase from Salmonella typhimurium (strain LT2 / SGSC1412 / ATCC 700720).